Consider the following 526-residue polypeptide: Peptide chain release factor 3 (526 aa).

The tr-type G domain occupies 9–277; it reads DKRRTFAIIS…GIVEWAPVPQ (269 aa). GTP-binding positions include 18-25, 86-90, and 140-143; these read SHPDAGKT, DTPGH, and NKLD.

This sequence belongs to the TRAFAC class translation factor GTPase superfamily. Classic translation factor GTPase family. PrfC subfamily.

The protein resides in the cytoplasm. Functionally, increases the formation of ribosomal termination complexes and stimulates activities of RF-1 and RF-2. It binds guanine nucleotides and has strong preference for UGA stop codons. It may interact directly with the ribosome. The stimulation of RF-1 and RF-2 is significantly reduced by GTP and GDP, but not by GMP. This Shewanella pealeana (strain ATCC 700345 / ANG-SQ1) protein is Peptide chain release factor 3.